A 665-amino-acid chain; its full sequence is Phenol hydroxylase (665 aa).

FAD contacts are provided by residues 18–19 (PA), 43–45 (DKR), 51–56 (NGQADG), Gln-118, Tyr-290, Asp-358, and 368–372 (GQGMN). Residue Asp-55 coordinates substrate. Tyr-290 is a substrate binding site.

The protein belongs to the PheA/TfdB FAD monooxygenase family. As to quaternary structure, homodimer. FAD serves as cofactor.

The catalysed reaction is phenol + NADPH + O2 + H(+) = catechol + NADP(+) + H2O. The protein operates within aromatic compound metabolism; phenol degradation. Its activity is regulated as follows. Inhibited by excess phenol. Heavy metals such AsCuSO(4), AgNO(3), or HgCl(2) severely inhibit activity. In terms of biological role, hydroxylates phenol to catechol. Phenol is the best substrate, but the enzyme also accepts isomeric diphenols, hydroxyl-, amino-, halogen- or methyl-substituted phenols and, to a lesser degree, cresols. The chain is Phenol hydroxylase from Cutaneotrichosporon cutaneum (Yeast).